The chain runs to 275 residues: Methylthioribulose-1-phosphate dehydratase (275 aa).

Cysteine 125 is a binding site for substrate. The Zn(2+) site is built by histidine 143 and histidine 145. The Proton donor/acceptor role is filled by glutamate 168. Residue histidine 233 participates in Zn(2+) binding.

It belongs to the aldolase class II family. MtnB subfamily. The cofactor is Zn(2+).

Its subcellular location is the cytoplasm. The enzyme catalyses 5-(methylsulfanyl)-D-ribulose 1-phosphate = 5-methylsulfanyl-2,3-dioxopentyl phosphate + H2O. It functions in the pathway amino-acid biosynthesis; L-methionine biosynthesis via salvage pathway; L-methionine from S-methyl-5-thio-alpha-D-ribose 1-phosphate: step 2/6. Functionally, catalyzes the dehydration of methylthioribulose-1-phosphate (MTRu-1-P) into 2,3-diketo-5-methylthiopentyl-1-phosphate (DK-MTP-1-P). The chain is Methylthioribulose-1-phosphate dehydratase from Lodderomyces elongisporus (strain ATCC 11503 / CBS 2605 / JCM 1781 / NBRC 1676 / NRRL YB-4239) (Yeast).